We begin with the raw amino-acid sequence, 3753 residues long: MVLESVVADLLNRFLGDYVENLNKSQLKLGIWGGNVALDNLQIKENALSELDVPFKVKAGQIDKLTLKIPWKNLYGEAVVATLEGLYLLVVPGASIKYDAVKEEKSLQDVKQKELSRIEEALQKAAEKGTHSGEFIYGLENFVYKDIKPGRKRKKHKKHFKKPFKGLDRSKDKPKEAKKDTFVEKLATQVIKNVQVKITDIHIKYEDDVTDPKRPLSFGVTLGELSLLTANEHWTPCILNEADKIIYKLIRLDSLSAYWNVNCSMSYQRSREQILDQLKNEILTSGNIPPNYQYIFQPISASAKLYMNPYAESELKTPKLDCNIEIQNIAIELTKPQYLSMIDLLESVDYMVRNAPYRKYKPYLPLHTNGRRWWKYAIDSVLEVHIRRYTQMWSWSNIKKHRQLLKSYKIAYKNKLTQSKVSEEIQKEIQDLEKTLDVFNIILARQQAQVEVIRSGQKLRKKSADTGEKRGGWFSGLWGKKESKKKDEESLIPETIDDLMTPEEKDKLFTAIGYSESTHNLTLPKQYVAHIMTLKLVSTSVTIRENKNIPEILKIQIIGLGTQVSQRPGAQALKVEAKLEHWYITGLRQQDIVPSLVASIGDTTSSLLKIKFETNPEDSPADQTLIVQSQPVEVIYDAKTVNAVVEFFQSNKGLDLEQITSATLMKLEEIKERTATGLTHIIETRKVLDLRINLKPSYLVVPQTGFHHEKSDLLILDFGTFQLNSKDQGLQKTTNSSLEEIMDKAYDKFDVEIKNVQLLFARAEETWKKCRFQHPSTMHILQPMDIHVELAKAMVEKDIRMARFKVSGGLPLMHVRISDQKMKDVLYLMNSIPLPQKSSAQSPERQVSSIPIISGGTKGLLGTSLLLDTVESESDDEYFDAEDGEPQTCKSMKGSELKKAAEVPNEELINLLLKFEIKEVILEFTKQQKEEDTILVFNVTQLGTEATMRTFDLTVVSYLKKISLDYHEIEGSKRKPLHLISSSDKPGLDLLKVEYIKADKNGPSFQTAFGKTEQTVKVAFSSLNLLLQTQALVASINYLTTIIPSDDQSISVAKEVQISTEKQQKNSTLPKAIVSSRDSDIIDFRLFAKLNAFCVIVCNEKNNIAEIKIQGLDSSLSLQSRKQSLFARLENIIVTDVDPKTVHKKAVSIMGNEVFRFNLDLYPDATEGDLYTDMSKVDGVLSLNVGCIQIVYLHKFLMSLLNFLNNFQTAKESLSAATAQAAERAATSVKDLAQRSFRVSINIDLKAPVIVIPQSSISTNAVVVDLGLIRVHNQFSLVSDEDYLNPPVIDRMDVQLTKLTLYRTVIQPGIYHPDIQLLHPINLEFLVNRNLAASWYHKVPVVEIKGHLDSMNVSLNQEDLNLLFRILTENLCEGTEDLDKVKPRVQETGEIKEPLEISISQDVHDSKNTLTTGVEEIRSVDIINMLLNFEIKEVVVTLMKKSEKKGRPLHELNVLQLGMEAKVKTYDMTAKAYLKKISMQCFDFTDSKGEPLHIINSSNVTDEPLLKMLLTKADSDGPEFKTIHDSTKQRLKVSFASLDLVLHLEALLSFMDFLSSAAPFSEPSSSEKESELKPLVGESRSIAVKAVSSNISQKDVFDLKITAELNAFNVFVCDQKCNIADIKIHGMDASISVKPKQTDVFARLKDIIVMNVDLQSIHKKAVSILGDEVFRFQLTLYPDATEGEAYADMSKVDGKLSFKVGCIQIVYVHKFFMSLLNFLNNFQTAKEALSTATVQAAERAASSMKDLAQKSFRLLMDINLKAPVIIIPQSSVSPNAVIADLGLIRVENKFSLVPMEHYSLPPVIDKMNIELTQLKLSRTILQASLPQNDIEILKPVNMLLSIQRNLAAAWYVQIPGMEIKGKLKPMQVALSEDDLTVLMKILLENLGEASSQPSPTQSVQETVRVRKVDVSSVPDHLKEQEDWTDSKLSMNQIVSLQFDFHFESLSIILYNNDINQESGVAFHNDSFQLGELRLHLMASSGKMFKDGSMNVSVKLKTCTLDDLREGIERATSRMIDRKNDQDNNSSMIDISYKQDKNGSQIDAVLDKLYVCASVEFLMTVADFFIKAVPQSPENVAKETQILPRQTATGKVKIEKDDSVRPNMTLKAMITDPEVVFVASLTKADAPALTASFQCNLSLSTSKLEQMMEASVRDLKVLACPFLREKRGKNITTVLQPCSLFMEKCTWASGKQNINIMVKEFIIKISPIILNTVLTIMAALSPKTKEDGSKDTSKEMENLWGIKSINDYNTWFLGVDTATEITESFKGIEHSLIEENCGVVVESIQVTLECGLGHRTVPLLLAESKFSGNIKNWTSLMAAVADVTLQVHYYNEIHAVWEPLIERVEGKRQWNLRLDVKKNPVQDKSLLPGDDFIPEPQMAIHISSGNTMNITISKSCLNVFNNLAKGFSEGTASTFDYSLKDRAPFTVKNAVGVPIKVKPNCNLRVMGFPEKSDIFDVDAGQNLELEYASMVPSSQGNLSILSRQESSFFTLTIVPHGYTEVANIPVARPGRRLYNVRNPNASHSDSVLVQIDATEGNKVITLRSPLQIKNHFSIAFIIYKFVKNVKLLERIGIARPEEEFHVPLDSYRCQLFIQPAGILEHQYKESTTYISWKEELHRSREVRCMLQCPSVEVSFLPLIVNTVALPDELSYICTHGEDWDVAYIIHLYPSLTLRNLLPYSLRYLLEGTAETHELAEGSTADVLHSRISGEIMELVLVKYQGKNWNGHFRIRDTLPEFFPVCFSSDSTEVTTVDLSVHVRRIGSRMVLSVFSPYWLINKTTRVLQYRSEDIHVKHPADFRDIILFSFKKKNIFTKNKVQLKISTSAWSSSFSLDTVGSYGCVKCPANNMEYLVGVSIKMSSFNLSRIVTLTPFCTIANKSSLELEVGEIASDGSMPTNKWNYIASSECLPFWPESLSGKLCVRVVGCEGSSKPFFYNRQDNGTLLSLEDLNGGILVDVNTAEHSTVITFSDYHEGSAPALIMNHTPWDILTYKQSGSPEEMVLLPRQARLFAWADPTGTRKLTWTYAANVGEHDLLKDGCGQFPYDANIQIHWVSFLDGRQRVLLFTDDVALVSKALQAEEMEQADYEITLSLHSLGLSLVNNESKQEVSYIGITSSGVVWEVKPKQKWKPFSQKQIILLEQSYQKHQISRDHGWIKLDNNFEVNFDKDPMEMRLPIRSPIKRDFLSGIQIEFKQSSHQRSLRARLYWLQVDNQLPGAMFPVVFHPVAPPKSIALDSEPKPFIDVSVITRFNEYSKVLQFKYFMVLIQEMALKIDQGFLGAIIALFTPTTDPEAERRRTKLIQQDIDALNAELMETSMTDMSILSFFEHFHISPVKLHLSLSLGSGGEESDKEKQEMFAVHSVNLLLKSIGATLTDVDDLIFKLAYYEIRYQFYKRDQLIWSVVRHYSEQFLKQMYVLVLGLDVLGNPFGLIRGLSEGVEALFYEPFQGAVQGPEEFAEGLVIGVRSLFGHTVGGAAGVVSRITGSVGKGLAAITMDKEYQQKRREELSRQPRDFGDSLARGGKGFLRGVVGGVTGIITKPVEGAKKEGAAGFFKGIGKGLVGAVARPTGGIVDMASSTFQGIQRAAESTEEVSSLRPPRLIHEDGIIRPYDRQESEGSDLLENHIKKLEGETYRYHCAIPGSKKTILMVTNRRVLCIKEVEILGLMCVDWQCPFEDFVFPPSVSENVLKISVKEQGLFHKKDSANQGCVRKVYLKDTATAERACNAIEDAQSTRQQQKLMKQSSVRLLRPQLPS.

A Chorein N-terminal domain is found at 3 to 116 (LESVVADLLN…LQDVKQKELS (114 aa)). Phosphoserine is present on S132. Residues 150–164 (GRKRKKHKKHFKKPF) are compositionally biased toward basic residues. The tract at residues 150 to 176 (GRKRKKHKKHFKKPFKGLDRSKDKPKE) is disordered. The segment covering 165 to 176 (KGLDRSKDKPKE) has biased composition (basic and acidic residues). T614 is modified (phosphothreonine). Phosphoserine is present on S619. T624 bears the Phosphothreonine mark. Residues S737, S842, S872, and S874 each carry the phosphoserine modification. An FFAT motif is present at residues 877–883 (EYFDAED). S1979 and S2473 each carry phosphoserine. Residues 2415–3309 (DYSLKDRAPF…IQQDIDALNA (895 aa)) are required for late endosome/lysosome localization. Positions 2766–3016 (LSVFSPYWLI…RLFAWADPTG (251 aa)) constitute an SHR-BD domain. Residues 3310–3753 (ELMETSMTDM…VRLLRPQLPS (444 aa)) are required for lipid droplet localization. An omega-N-methylarginine mark is found at R3519 and R3526. N6-acetyllysine is present on K3538. S3641 carries the post-translational modification Phosphoserine.

This sequence belongs to the VPS13 family. As to expression, widely expressed.

It localises to the mitochondrion outer membrane. It is found in the lipid droplet. Its subcellular location is the endoplasmic reticulum membrane. The protein resides in the lysosome membrane. The protein localises to the late endosome membrane. In terms of biological role, mediates the transfer of lipids between membranes at organelle contact sites. Necessary for proper mitochondrial function and maintenance of mitochondrial transmembrane potential. Involved in the regulation of PINK1/PRKN-mediated mitophagy in response to mitochondrial depolarization. This Homo sapiens (Human) protein is Intermembrane lipid transfer protein VPS13C.